The following is a 117-amino-acid chain: Nitrogen regulatory protein GlnK1 (117 aa).

Residues threonine 32, 40–42 (GAQ), and 92–95 (GSGK) contribute to the ADP site. ATP contacts are provided by residues threonine 32, 40–42 (GAQ), and 92–95 (GSGK).

It belongs to the P(II) protein family. As to quaternary structure, homotrimer. Interacts and forms stable complexes with the glutamine synthetase GlnA1.

It localises to the cytoplasm. With respect to regulation, inhibitory effects on GlnA1 are abolished in the presence of the effector 2-oxoglutarate. In terms of biological role, involved in the regulation of nitrogen metabolism. Regulates the activity of its targets by protein-protein interaction in response to the nitrogen status of the cell. Allows finetuning control of the glutamine synthetase GlnA1 under changing nitrogen availabilities via direct protein interaction. The sequence is that of Nitrogen regulatory protein GlnK1 from Methanosarcina mazei (strain ATCC BAA-159 / DSM 3647 / Goe1 / Go1 / JCM 11833 / OCM 88) (Methanosarcina frisia).